Here is a 312-residue protein sequence, read N- to C-terminus: Nucleosome assembly protein 1-like 4 (312 aa).

Residues 24 to 78 (VETLKNKLQALAEQHVDVLESLAPSVRKRVDVLMEIQSQHDELEVKFFEEKAALE) adopt a coiled-coil conformation. A Nuclear export signal motif is present at residues 45-60 (LAPSVRKRVDVLMEIQ). Positions 288-312 (EDYGASWVDDEEEDDNDDEYSDEEA) are disordered.

The protein belongs to the nucleosome assembly protein (NAP) family.

It localises to the nucleus. The protein resides in the cytoplasm. In terms of biological role, may modulate chromatin structure by regulation of nucleosome assembly/disassembly. The chain is Nucleosome assembly protein 1-like 4 from Oryza sativa subsp. indica (Rice).